The chain runs to 228 residues: MTARRAPAVNRDVLEQMLVEGTAALDLTLTDAQRNQLLDYVALLGKWNAVYNLTAIRDPKQMLIQHILDSLSIVPHLRGRTSARVLDVGSGGGLPGIVLAIVEPGWQVTLNDIVQKKSAFQTQMRAELKLVNLSVVTGRVESLQPGVEVPEKFDMIVSRAFADLSDFVKLARHLVAPGGSIWAMKGVHPDDEIARLPEGSHVKQTIRLAVPMLDAERHLFEVAVDDAN.

S-adenosyl-L-methionine contacts are provided by residues glycine 89, leucine 94, 140 to 141 (VE), and arginine 159.

The protein belongs to the methyltransferase superfamily. RNA methyltransferase RsmG family.

Its subcellular location is the cytoplasm. It carries out the reaction guanosine(527) in 16S rRNA + S-adenosyl-L-methionine = N(7)-methylguanosine(527) in 16S rRNA + S-adenosyl-L-homocysteine. Functionally, specifically methylates the N7 position of guanine in position 527 of 16S rRNA. This chain is Ribosomal RNA small subunit methyltransferase G, found in Burkholderia cenocepacia (strain ATCC BAA-245 / DSM 16553 / LMG 16656 / NCTC 13227 / J2315 / CF5610) (Burkholderia cepacia (strain J2315)).